Here is a 293-residue protein sequence, read N- to C-terminus: Glycine--tRNA ligase alpha subunit (293 aa).

The protein belongs to the class-II aminoacyl-tRNA synthetase family. Tetramer of two alpha and two beta subunits.

It is found in the cytoplasm. It catalyses the reaction tRNA(Gly) + glycine + ATP = glycyl-tRNA(Gly) + AMP + diphosphate. The chain is Glycine--tRNA ligase alpha subunit from Wolinella succinogenes (strain ATCC 29543 / DSM 1740 / CCUG 13145 / JCM 31913 / LMG 7466 / NCTC 11488 / FDC 602W) (Vibrio succinogenes).